The sequence spans 162 residues: Interleukin-15 (162 aa).

Positions 1–29 (MKILKPYMRNTSISCYLCFLLNSHFLTEA) are cleaved as a signal peptide. A propeptide spanning residues 30–48 (GIHVFILGCVSVGLPKTEA) is cleaved from the precursor. 2 disulfides stabilise this stretch: Cys83/Cys133 and Cys90/Cys136. Residues Asn104, Asn108, and Asn119 are each glycosylated (N-linked (GlcNAc...) asparagine).

This sequence belongs to the IL-15/IL-21 family.

The protein resides in the secreted. In terms of biological role, cytokine that plays a major role in the development of inflammatory and protective immune responses to microbial invaders and parasites by modulating immune cells of both the innate and adaptive immune systems. Stimulates the proliferation and activation of natural killer cells, T-cells and B-cells and promotes the secretion of several cytokines. In monocytes, induces the production of IL8 and monocyte chemotactic protein 1/CCL2, two chemokines that attract neutrophils and monocytes respectively to sites of infection. Unlike most cytokines, which are secreted in soluble form, IL15 is expressed in association with its high affinity IL15RA on the surface of IL15-producing cells and delivers signals to target cells that express IL2RB and IL2RG receptor subunits. Binding to its receptor triggers the phosphorylation of JAK1 and JAK3 and the recruitment and subsequent phosphorylation of signal transducer and activator of transcription-3/STAT3 and STAT5. In mast cells, induces the rapid tyrosine phosphorylation of STAT6 and thereby controls mast cell survival and release of cytokines such as IL4. The polypeptide is Interleukin-15 (Il15) (Mus musculus (Mouse)).